Reading from the N-terminus, the 371-residue chain is Deoxyhypusine synthase (371 aa).

NAD(+) is bound by residues 107–111 (SNLIS), 133–135 (TTG), Glu-139, and Asp-240. Spermidine is bound at residue 138–139 (EE). Asp-245 is a binding site for spermidine. Gly-287 lines the NAD(+) pocket. His-292 lines the spermidine pocket. 312–313 (TA) contributes to the NAD(+) binding site. Spermidine is bound by residues 318 to 320 (GSD) and 327 to 333 (EAVSWGK). Catalysis depends on Lys-333, which acts as the Nucleophile. NAD(+) is bound at residue 346–347 (DA).

The protein belongs to the deoxyhypusine synthase family. NAD(+) is required as a cofactor. In terms of tissue distribution, expressed in shoot tips.

The catalysed reaction is [eIF5A protein]-L-lysine + spermidine = [eIF5A protein]-deoxyhypusine + propane-1,3-diamine. Its pathway is protein modification; eIF5A hypusination. In terms of biological role, catalyzes the NAD-dependent oxidative cleavage of spermidine and the subsequent transfer of the butylamine moiety of spermidine to the epsilon-amino group of a specific lysine residue of the eIF-5A precursor protein to form the intermediate deoxyhypusine residue. Also able to produce homospermidine from putrescine. The protein is Deoxyhypusine synthase (DHS1) of Senecio vernalis (Spring groundsel).